The following is a 531-amino-acid chain: Light-independent protochlorophyllide reductase subunit B (531 aa).

D36 is a [4Fe-4S] cluster binding site. The Proton donor role is filled by D296. 431 to 432 (GM) is a substrate binding site.

The protein belongs to the ChlB/BchB/BchZ family. As to quaternary structure, protochlorophyllide reductase is composed of three subunits; ChlL, ChlN and ChlB. Forms a heterotetramer of two ChlB and two ChlN subunits. The cofactor is [4Fe-4S] cluster.

The protein localises to the plastid. Its subcellular location is the chloroplast. The enzyme catalyses chlorophyllide a + oxidized 2[4Fe-4S]-[ferredoxin] + 2 ADP + 2 phosphate = protochlorophyllide a + reduced 2[4Fe-4S]-[ferredoxin] + 2 ATP + 2 H2O. It functions in the pathway porphyrin-containing compound metabolism; chlorophyll biosynthesis (light-independent). Its function is as follows. Component of the dark-operative protochlorophyllide reductase (DPOR) that uses Mg-ATP and reduced ferredoxin to reduce ring D of protochlorophyllide (Pchlide) to form chlorophyllide a (Chlide). This reaction is light-independent. The NB-protein (ChlN-ChlB) is the catalytic component of the complex. The protein is Light-independent protochlorophyllide reductase subunit B of Nephroselmis olivacea (Green alga).